Here is a 134-residue protein sequence, read N- to C-terminus: Ribonuclease VapC2 (134 aa).

The PINc domain occupies 3–124 (YMLDTNICVY…TNNIKEFKRI (122 aa)). D6 contacts Mg(2+).

Belongs to the PINc/VapC protein family. As to quaternary structure, forms complexes with VapB2; probably VapC2(4):VapB2(2) in the absence of DNA, and VapC2(4):VapB2(4) in the presence of DNA. Crystallizes as heterodimers with stoichiometry VapC2(4):VapB2(4) in the presence of its probable promoter DNA. The heterodimers are in contact via alternative VapC-VapC and VapB-VapB interactions. This subunit does not contact DNA. Mg(2+) is required as a cofactor.

Its function is as follows. Toxic component of a type II toxin-antitoxin (TA) system. Has ssRNase activity. Upon expression in E.coli or S.cerevisiae inhibits growth in liquid culture; in S.cerevisiae its expression leads to apoptosis-like characteristics. Rapidly induces apoptosis (within 2 hours) upon microinjection into mouse fibroblasts (L929 line); pretreatment of cells with dexamethasone protects them. Probably contributes to host cell death if bacterial cell lysis occurs during host infection. Its toxic effect is neutralized by coexpression with cognate antitoxin VapB2, its RNase activity is partially inhibited in vitro by VapB2. This is Ribonuclease VapC2 from Rickettsia felis (strain ATCC VR-1525 / URRWXCal2) (Rickettsia azadi).